Reading from the N-terminus, the 141-residue chain is Aspartate 1-decarboxylase (141 aa).

The Schiff-base intermediate with substrate; via pyruvic acid role is filled by Ser25. Ser25 carries the post-translational modification Pyruvic acid (Ser). Thr57 contributes to the substrate binding site. The Proton donor role is filled by Tyr58. 73-75 (GAA) is a binding site for substrate.

It belongs to the PanD family. Heterooctamer of four alpha and four beta subunits. Pyruvate serves as cofactor. Post-translationally, is synthesized initially as an inactive proenzyme, which is activated by self-cleavage at a specific serine bond to produce a beta-subunit with a hydroxyl group at its C-terminus and an alpha-subunit with a pyruvoyl group at its N-terminus.

It localises to the cytoplasm. The enzyme catalyses L-aspartate + H(+) = beta-alanine + CO2. The protein operates within cofactor biosynthesis; (R)-pantothenate biosynthesis; beta-alanine from L-aspartate: step 1/1. Functionally, catalyzes the pyruvoyl-dependent decarboxylation of aspartate to produce beta-alanine. This chain is Aspartate 1-decarboxylase, found in Salinispora arenicola (strain CNS-205).